We begin with the raw amino-acid sequence, 228 residues long: Woronin body membrane protein wscA (228 aa).

4 consecutive transmembrane segments (helical) span residues 89 to 109, 130 to 150, 162 to 182, and 185 to 205; these read MTLY…GILQ, LIVS…IAGA, AGFM…LAFA, and FLPE…IGTY.

This sequence belongs to the peroxisomal membrane protein PXMP2/4 family. As to quaternary structure, self-assembles into detergent-resistant oligomers and forms a complex with hexA assemblies.

Its subcellular location is the peroxisome membrane. It localises to the cell septum. In terms of biological role, woronin sorting complex protein involved in both Woronin bodies (WB) formation and inherence. Localizes to large peroxisome membranes where it self-assembles into detergent-resistant oligomers that envelop hex-1 assemblies, producing asymmetrical nascent WBs. These structures are then delivered to the cell cortex, which permits partitioning of the nascent WB and WB inheritance. The protein is Woronin body membrane protein wscA of Aspergillus fumigatus (strain ATCC MYA-4609 / CBS 101355 / FGSC A1100 / Af293) (Neosartorya fumigata).